A 600-amino-acid chain; its full sequence is Aspartate--tRNA(Asp/Asn) ligase (600 aa).

Position 175 (Glu-175) interacts with L-aspartate. Positions 199–202 are aspartate; it reads QLFK. Position 221 (Arg-221) interacts with L-aspartate. ATP contacts are provided by residues 221-223 and Gln-230; that span reads RDE. His-453 contributes to the L-aspartate binding site. Glu-487 is a binding site for ATP. Arg-494 serves as a coordination point for L-aspartate. Residue 539–542 participates in ATP binding; that stretch reads GWDR. A disordered region spans residues 564 to 600; that stretch reads GGVDPLTDAPAPITPLQRKESGIDAKPKAAENKPEEK. Over residues 580-600 the composition is skewed to basic and acidic residues; sequence QRKESGIDAKPKAAENKPEEK.

It belongs to the class-II aminoacyl-tRNA synthetase family. Type 1 subfamily. In terms of assembly, homodimer.

Its subcellular location is the cytoplasm. The catalysed reaction is tRNA(Asx) + L-aspartate + ATP = L-aspartyl-tRNA(Asx) + AMP + diphosphate. Functionally, aspartyl-tRNA synthetase with relaxed tRNA specificity since it is able to aspartylate not only its cognate tRNA(Asp) but also tRNA(Asn). Reaction proceeds in two steps: L-aspartate is first activated by ATP to form Asp-AMP and then transferred to the acceptor end of tRNA(Asp/Asn). The protein is Aspartate--tRNA(Asp/Asn) ligase of Corynebacterium efficiens (strain DSM 44549 / YS-314 / AJ 12310 / JCM 11189 / NBRC 100395).